Consider the following 112-residue polypeptide: uncharacterized protein (112 aa).

A disordered region spans residues 70–112; that stretch reads GLYRGRRPPGRDAARPTTAILFAQGRPPLLDQRAPTRRGSHQR.

This is an uncharacterized protein from Homo sapiens (Human).